Reading from the N-terminus, the 116-residue chain is Ribosome-binding factor A (116 aa).

Belongs to the RbfA family. In terms of assembly, monomer. Binds 30S ribosomal subunits, but not 50S ribosomal subunits or 70S ribosomes.

It is found in the cytoplasm. Functionally, one of several proteins that assist in the late maturation steps of the functional core of the 30S ribosomal subunit. Associates with free 30S ribosomal subunits (but not with 30S subunits that are part of 70S ribosomes or polysomes). Required for efficient processing of 16S rRNA. May interact with the 5'-terminal helix region of 16S rRNA. The protein is Ribosome-binding factor A of Streptococcus pyogenes serotype M28 (strain MGAS6180).